The primary structure comprises 306 residues: Putative secretory carrier-associated membrane protein 1 (306 aa).

The disordered stretch occupies residues 1–60 (MAGRYDSNPFEEDDVNPFSEQARGKAGGQPSYGGGAFYMPNPRNVPSMSSNSRLSPLPPE). Topologically, residues 1–141 (MAGRYDSNPF…EIPSHLQRMQ (141 aa)) are cytoplasmic. Positions 25 to 36 (KAGGQPSYGGGA) are enriched in gly residues. The segment covering 44–54 (NVPSMSSNSRL) has biased composition (polar residues). A coiled-coil region spans residues 72–109 (LDSSKDLKNREKELQAREAELNKREKELKRREEAAARA). Helical transmembrane passes span 142 to 162 (YVAF…VIAV), 174 to 194 (IWLL…VLWY), 209 to 229 (FGLF…SAVA), and 257 to 277 (IFYF…IWVI). Residues 278 to 306 (QQVYMYFRGSGKAAEMKRDATRGAMRAAF) lie on the Cytoplasmic side of the membrane.

Belongs to the SCAMP family.

Its subcellular location is the cell membrane. The protein resides in the cytoplasmic vesicle. It is found in the secretory vesicle membrane. Its function is as follows. Probably involved in membrane trafficking. The protein is Putative secretory carrier-associated membrane protein 1 (SCAMP1) of Oryza sativa subsp. indica (Rice).